The primary structure comprises 159 residues: Cytochrome c-type biogenesis CcmH-like mitochondrial protein (159 aa).

At M1–D82 the chain is on the mitochondrial intermembrane side. Residues C27 and C30 each coordinate heme. The chain crosses the membrane as a helical span at residues L83 to Y105. The Mitochondrial matrix portion of the chain corresponds to Q106 to R159.

The protein belongs to the CcmH/CycL/Ccl2/NrfF family. In terms of assembly, interacts (via N-terminus) with CYTC-1. Interacts with CCMFN1 and CCMFN2.

The protein localises to the mitochondrion inner membrane. In terms of biological role, plays a central role in mitochondrial cytochrome c maturation. Probable component of a heme lyase complex involved in the reduction of apocytochrome c. Forms a complex with CCMF proteins (CCMFC, CCMFN1 and CCMFN2) that performs the assembly of heme with c-type apocytochromes in mitochondria. The polypeptide is Cytochrome c-type biogenesis CcmH-like mitochondrial protein (Arabidopsis thaliana (Mouse-ear cress)).